Consider the following 328-residue polypeptide: Phosphate acyltransferase (328 aa).

It belongs to the PlsX family. In terms of assembly, homodimer. Probably interacts with PlsY.

It localises to the cytoplasm. The enzyme catalyses a fatty acyl-[ACP] + phosphate = an acyl phosphate + holo-[ACP]. Its pathway is lipid metabolism; phospholipid metabolism. Catalyzes the reversible formation of acyl-phosphate (acyl-PO(4)) from acyl-[acyl-carrier-protein] (acyl-ACP). This enzyme utilizes acyl-ACP as fatty acyl donor, but not acyl-CoA. This Campylobacter jejuni subsp. doylei (strain ATCC BAA-1458 / RM4099 / 269.97) protein is Phosphate acyltransferase.